The primary structure comprises 99 residues: MNITDVRVFPVEEDKLKAYVTITLDHCFVIRDLKVIHGSTGLFIAMPAKKRKDGTYKDIAHPLNADTRSQMERVILMEYERHLHQAQAGMLVAAPADLD.

It belongs to the SpoVG family.

Could be involved in septation. The polypeptide is Putative septation protein SpoVG (Myxococcus xanthus (strain DK1622)).